The chain runs to 160 residues: 2-C-methyl-D-erythritol 2,4-cyclodiphosphate synthase (160 aa).

Residues Asp11 and His13 each contribute to the a divalent metal cation site. Residues 11–13 and 37–38 each bind 4-CDP-2-C-methyl-D-erythritol 2-phosphate; these read DVH and HS. A divalent metal cation is bound at residue His45. Residues 59–61, 64–68, 135–138, Phe142, and Arg145 each bind 4-CDP-2-C-methyl-D-erythritol 2-phosphate; these read DIG, FPDTD, and TTTE.

Belongs to the IspF family. In terms of assembly, homotrimer. Requires a divalent metal cation as cofactor.

It carries out the reaction 4-CDP-2-C-methyl-D-erythritol 2-phosphate = 2-C-methyl-D-erythritol 2,4-cyclic diphosphate + CMP. It functions in the pathway isoprenoid biosynthesis; isopentenyl diphosphate biosynthesis via DXP pathway; isopentenyl diphosphate from 1-deoxy-D-xylulose 5-phosphate: step 4/6. Involved in the biosynthesis of isopentenyl diphosphate (IPP) and dimethylallyl diphosphate (DMAPP), two major building blocks of isoprenoid compounds. Catalyzes the conversion of 4-diphosphocytidyl-2-C-methyl-D-erythritol 2-phosphate (CDP-ME2P) to 2-C-methyl-D-erythritol 2,4-cyclodiphosphate (ME-CPP) with a corresponding release of cytidine 5-monophosphate (CMP). In Alcanivorax borkumensis (strain ATCC 700651 / DSM 11573 / NCIMB 13689 / SK2), this protein is 2-C-methyl-D-erythritol 2,4-cyclodiphosphate synthase.